A 395-amino-acid chain; its full sequence is Tryptophan--tRNA ligase, cytoplasmic (395 aa).

The short motif at Pro91–His100 is the 'HIGH' region element. A 'KMSKS' region motif is present at residues Lys275 to Ser279. Phosphothreonine occurs at positions 288 and 290.

It belongs to the class-I aminoacyl-tRNA synthetase family.

Its subcellular location is the cytoplasm. It carries out the reaction tRNA(Trp) + L-tryptophan + ATP = L-tryptophyl-tRNA(Trp) + AMP + diphosphate + H(+). The polypeptide is Tryptophan--tRNA ligase, cytoplasmic (wrs1) (Schizosaccharomyces pombe (strain 972 / ATCC 24843) (Fission yeast)).